Consider the following 61-residue polypeptide: Temporin-CDYa (61 aa).

Residues 1–22 form the signal peptide; sequence MFPLKKSLLLLFFLGTINFSFC. The propeptide occupies 23 to 44; that stretch reads EEERNAEEERRDDPEERDVAME. The residue at position 59 (L59) is a Leucine amide.

The protein belongs to the frog skin active peptide (FSAP) family. Temporin subfamily. In terms of tissue distribution, expressed by the skin glands.

The protein localises to the secreted. Its function is as follows. Antimicrobial peptide. This is Temporin-CDYa from Rana dybowskii (Dybovsky's frog).